A 34-amino-acid chain; its full sequence is Photosystem II reaction center protein M (34 aa).

Residues I5 to I25 traverse the membrane as a helical segment.

Belongs to the PsbM family. In terms of assembly, PSII is composed of 1 copy each of membrane proteins PsbA, PsbB, PsbC, PsbD, PsbE, PsbF, PsbH, PsbI, PsbJ, PsbK, PsbL, PsbM, PsbT, PsbX, PsbY, PsbZ, Psb30/Ycf12, at least 3 peripheral proteins of the oxygen-evolving complex and a large number of cofactors. It forms dimeric complexes.

It localises to the plastid. It is found in the chloroplast thylakoid membrane. Its function is as follows. One of the components of the core complex of photosystem II (PSII). PSII is a light-driven water:plastoquinone oxidoreductase that uses light energy to abstract electrons from H(2)O, generating O(2) and a proton gradient subsequently used for ATP formation. It consists of a core antenna complex that captures photons, and an electron transfer chain that converts photonic excitation into a charge separation. This subunit is found at the monomer-monomer interface. This Cucumis sativus (Cucumber) protein is Photosystem II reaction center protein M.